The chain runs to 371 residues: Putative glutamate--cysteine ligase 2 (371 aa).

This sequence belongs to the glutamate--cysteine ligase type 2 family. YbdK subfamily.

It carries out the reaction L-cysteine + L-glutamate + ATP = gamma-L-glutamyl-L-cysteine + ADP + phosphate + H(+). Functionally, ATP-dependent carboxylate-amine ligase which exhibits weak glutamate--cysteine ligase activity. The chain is Putative glutamate--cysteine ligase 2 from Cupriavidus taiwanensis (strain DSM 17343 / BCRC 17206 / CCUG 44338 / CIP 107171 / LMG 19424 / R1) (Ralstonia taiwanensis (strain LMG 19424)).